The following is an 869-amino-acid chain: Probable beta-glucosidase F (869 aa).

Residues 1–19 (MRVLSAIALVASLVPSALS) form the signal peptide. Asn69, Asn77, and Asn261 each carry an N-linked (GlcNAc...) asparagine glycan. The active site involves Asp289. Asn332, Asn364, Asn399, Asn425, and Asn478 each carry an N-linked (GlcNAc...) asparagine glycan. A disordered region spans residues 678–698 (AYPPTRPPKGPTPTYPTTIPN). Positions 681–691 (PTRPPKGPTPT) are enriched in pro residues. Asn728 carries an N-linked (GlcNAc...) asparagine glycan.

Belongs to the glycosyl hydrolase 3 family.

The protein localises to the secreted. The enzyme catalyses Hydrolysis of terminal, non-reducing beta-D-glucosyl residues with release of beta-D-glucose.. It participates in glycan metabolism; cellulose degradation. Its function is as follows. Beta-glucosidases are one of a number of cellulolytic enzymes involved in the degradation of cellulosic biomass. Catalyzes the last step releasing glucose from the inhibitory cellobiose. The sequence is that of Probable beta-glucosidase F (bglF) from Neosartorya fischeri (strain ATCC 1020 / DSM 3700 / CBS 544.65 / FGSC A1164 / JCM 1740 / NRRL 181 / WB 181) (Aspergillus fischerianus).